The following is a 104-amino-acid chain: Large ribosomal subunit protein uL24 (104 aa).

It belongs to the universal ribosomal protein uL24 family. Part of the 50S ribosomal subunit.

In terms of biological role, one of two assembly initiator proteins, it binds directly to the 5'-end of the 23S rRNA, where it nucleates assembly of the 50S subunit. Its function is as follows. One of the proteins that surrounds the polypeptide exit tunnel on the outside of the subunit. In Pseudoalteromonas translucida (strain TAC 125), this protein is Large ribosomal subunit protein uL24.